A 1185-amino-acid chain; its full sequence is Calmodulin-binding transcription activator homolog 1 (1185 aa).

The CG-1 DNA-binding region spans 72-200; sequence AVELFPCFKD…YLNVKTNNKI (129 aa). Disordered stretches follow at residues 252–277 and 390–411; these read GVNLPTSPLPQEPSSSTSRELERRNS and KIRSGSQESPMGPPSSSSVTST. Low complexity predominate over residues 393 to 411; the sequence is SGSQESPMGPPSSSSVTST. The IPT/TIG domain maps to 418-498; sequence EMTPSSSSLK…ISTASEFTYE (81 aa). An ANK repeat occupies 616–646; sequence DGSTPLHTACKNSASRIARLIISIDSSAIDV. Positions 957-984 constitute an IQ domain; it reads EAAMVIQRAYRVYRARSTTRRQEDIERR. The interval 1121-1185 is disordered; it reads CPQTSGDQRN…KPPYGCGTLA (65 aa). The segment covering 1128–1147 has biased composition (basic and acidic residues); sequence QRNKRDSDGERKRDAHHDAP.

It belongs to the CAMTA family. As to quaternary structure, may interact with calmodulin. In terms of tissue distribution, expressed broadly in the nervous system.

It is found in the nucleus. In terms of biological role, transcription factor. Positively modulates neuronal levels of the ubiquitous Ca2+ sensor calmodulin/cmd-1, probably by direct binding to the cmd-1 promoter, thereby regulating Ca2+ signaling, physiology, and behavior. The sequence is that of Calmodulin-binding transcription activator homolog 1 from Caenorhabditis elegans.